A 158-amino-acid chain; its full sequence is Transcription elongation factor GreA (158 aa).

Residues 49–73 (QAAREQQGFIEGRIKEIEAKLANAQ) are a coiled coil.

The protein belongs to the GreA/GreB family.

Functionally, necessary for efficient RNA polymerase transcription elongation past template-encoded arresting sites. The arresting sites in DNA have the property of trapping a certain fraction of elongating RNA polymerases that pass through, resulting in locked ternary complexes. Cleavage of the nascent transcript by cleavage factors such as GreA or GreB allows the resumption of elongation from the new 3'terminus. GreA releases sequences of 2 to 3 nucleotides. This Methylococcus capsulatus (strain ATCC 33009 / NCIMB 11132 / Bath) protein is Transcription elongation factor GreA.